A 93-amino-acid chain; its full sequence is UPF0358 protein RBAM_014700 (93 aa).

This sequence belongs to the UPF0358 family.

The chain is UPF0358 protein RBAM_014700 from Bacillus velezensis (strain DSM 23117 / BGSC 10A6 / LMG 26770 / FZB42) (Bacillus amyloliquefaciens subsp. plantarum).